We begin with the raw amino-acid sequence, 519 residues long: 2-isopropylmalate synthase (519 aa).

One can recognise a Pyruvate carboxyltransferase domain in the interval valine 5–tyrosine 267. Mn(2+) contacts are provided by aspartate 14, histidine 202, histidine 204, and asparagine 238. The tract at residues valine 392 to valine 519 is regulatory domain.

It belongs to the alpha-IPM synthase/homocitrate synthase family. LeuA type 1 subfamily. Homodimer. It depends on Mn(2+) as a cofactor.

It is found in the cytoplasm. The enzyme catalyses 3-methyl-2-oxobutanoate + acetyl-CoA + H2O = (2S)-2-isopropylmalate + CoA + H(+). It functions in the pathway amino-acid biosynthesis; L-leucine biosynthesis; L-leucine from 3-methyl-2-oxobutanoate: step 1/4. Catalyzes the condensation of the acetyl group of acetyl-CoA with 3-methyl-2-oxobutanoate (2-ketoisovalerate) to form 3-carboxy-3-hydroxy-4-methylpentanoate (2-isopropylmalate). This Proteus mirabilis (strain HI4320) protein is 2-isopropylmalate synthase.